A 319-amino-acid polypeptide reads, in one-letter code: 2-oxoglutarate and iron-dependent oxygenase domain-containing protein 3 (319 aa).

The disordered stretch occupies residues 1–34 (MAPQRRAATKAPEGNGAAERRNRSSTKKDRAPRE). Over 1–42 (MAPQRRAATKAPEGNGAAERRNRSSTKKDRAPREVQRLWQRP) the chain is Cytoplasmic. Residues 18–34 (AERRNRSSTKKDRAPRE) are compositionally biased toward basic and acidic residues. A helical; Signal-anchor for type II membrane protein membrane pass occupies residues 43-65 (WLRTAGLGAGFVLTALLLWSSLG). Residues 66-319 (ADDGVAEVLA…DHGIEDPAFP (254 aa)) are Lumenal-facing. The 103-residue stretch at 207 to 309 (KPTFFSRINS…AITIAFSCNP (103 aa)) folds into the Fe2OG dioxygenase domain. Asparagine 215 carries an N-linked (GlcNAc...) asparagine glycan. The Fe cation site is built by histidine 230, aspartate 232, and histidine 288. Arginine 298 is an active-site residue. Arginine 298 is a binding site for 2-oxoglutarate.

The protein belongs to the OGFOD3 family. The cofactor is Fe(2+). L-ascorbate serves as cofactor.

It is found in the membrane. This is 2-oxoglutarate and iron-dependent oxygenase domain-containing protein 3 (OGFOD3) from Homo sapiens (Human).